The following is a 987-amino-acid chain: MAGIRLHVIAPLALAAVSKCARDPAVYVRRCAANALPKLHDLRLEEHASAIEELVGILLNDHSPGVVGAAAAAFTSICPNNFKLIGKNYKKLCQILPDVEEWGQILLIGTLLRYVVARHGLVRESLMLSIHGTNSNGFCEKDGLGRDLTLDKEDGGKSDSFDVNLVSLVSKCYIQGPDEYLSRSSCTDTVSSAFDTKETTSIAHNEDVKILLQCTSPLLWSNNSAVVLAAAGVQWIMAPLEDVKKIVKPLLFLLRSSSASKYVVLCNILVFAKAVPSLFAPHFENFFICSSDAYQVKAYKLEMLSLIATTSSIASILREFEDYIKDPDRRFAADTVAAIGLCAKRLMTIPTTCLDGLLALVRQESFAGDFESADGEAGVLVQAVMSIQTMIERDPLRHEKVLIQLFRSLDSIKVAAARATIIWMVGVYCSLGHIIPRMLTTITKYLAWSFKSEASETKLQILNTIAKVLISAEAGDFHMLKRIVVYVFELGEYDLSYDIRDRTRFLKKLLSCKLASHEPAEDSVASQENIAAHVVEHVFGRKLKSVSPITLHNRFYLPGSLSQIVLHAAPGYEPLPKPCSFVYEEQDQLSDLDKQREAAADLDGSEESSETGDENGSSDYDSESSNGSDFSSEGDERTVSNDANDPAAPLIQISETSVSADQEELRSRRALDLWLDDQPSTSNQTPSALNSNQSSYAKISIGDVGSRVKPKSYSLVDPGNGSGLKVDYAFLSEVSNVSPLHVCVEVLFENSSAEPILEVNLEDEESMKVADSSEQTLVGKANASYNNIPTLIPMEEISCLEPHQSTKRLIQVRFHHHLLPMRLTLHYNEKKVPVKLRPDLGYLVKPFSMSIEEFLATESRLPGMFEYSRRCTFDDHVKDSRTENGKDKFLSICESITLKVLSNSNLHLVSVDLPVANSLEDATGLRLRFSSKILSSEIPLLITITVEGKCTEVLNLTVKINCEETVFGLNLLNRIANFMVEPSSSAT.

A disordered region spans residues 586-662 (QDQLSDLDKQ…ISETSVSADQ (77 aa)). Positions 603-613 (DGSEESSETGD) are enriched in acidic residues. The span at 614 to 631 (ENGSSDYDSESSNGSDFS) shows a compositional bias: low complexity.

Belongs to the adaptor complexes large subunit family. In terms of assembly, adaptor protein complex 3 (AP-3) is a heterotetramer composed of two large adaptins (delta-type subunit and beta-type subunit), a medium adaptin (mu-type subunit) and a small adaptin (sigma-type subunit).

Its subcellular location is the cytoplasm. The protein resides in the golgi apparatus. It is found in the cytoplasmic vesicle membrane. Its function is as follows. Part of the AP-3 complex, an adaptor-related complex which seems to be clathrin-associated. The complex is associated with the Golgi region as well as more peripheral structures. It facilitates the budding of vesicles from the Golgi membrane and may be directly involved in trafficking to the vacuole. It also function in maintaining the identity of lytic vacuoles and in regulating the transition between storage and lytic vacuoles. The sequence is that of AP3-complex subunit beta-A (AP3BA) from Arabidopsis thaliana (Mouse-ear cress).